The following is a 394-amino-acid chain: Argininosuccinate synthase (394 aa).

ATP-binding positions include 7 to 15 and Ala34; that span reads AYSGGLDTS. The L-citrulline site is built by Tyr85 and Ser90. Gly115 provides a ligand contact to ATP. Residues Thr117, Asn121, and Asp122 each coordinate L-aspartate. Asn121 provides a ligand contact to L-citrulline. Positions 125, 176, 185, 261, and 273 each coordinate L-citrulline.

Belongs to the argininosuccinate synthase family. Type 1 subfamily. Homotetramer.

It localises to the cytoplasm. The enzyme catalyses L-citrulline + L-aspartate + ATP = 2-(N(omega)-L-arginino)succinate + AMP + diphosphate + H(+). Its pathway is amino-acid biosynthesis; L-arginine biosynthesis; L-arginine from L-ornithine and carbamoyl phosphate: step 2/3. The chain is Argininosuccinate synthase from Ehrlichia ruminantium (strain Welgevonden).